Here is a 587-residue protein sequence, read N- to C-terminus: Hatching enzyme (587 aa).

The N-terminal stretch at 1–18 is a signal peptide; it reads MANSGLILLVMFMIHVTT. The propeptide at 19–166 is activation peptide; that stretch reads VHNVPLPSTA…PRCGVPDVLP (148 aa). N-linked (GlcNAc...) asparagine glycans are attached at residues Asn-64, Asn-126, and Asn-141. A Cysteine switch motif is present at residues 157 to 164; the sequence is PRCGVPDV. Zn(2+)-binding residues include Cys-159 and His-283. The active site involves Glu-284. Zn(2+) contacts are provided by His-287 and His-293. The interval 325 to 382 is disordered; it reads LYGSNSGSGTTTTTRRPTTTRATTTRRTTTTRATTTRATTTTTTSPSRPSPPRRACSG. Low complexity predominate over residues 334-371; the sequence is TTTTTRRPTTTRATTTRRTTTTRATTTRATTTTTTSPS. An intrachain disulfide couples Cys-380 to Cys-582. Hemopexin repeat units lie at residues 381–422, 425–468, 469–513, and 518–570; these read SGSF…RFGF, PQNI…WVGL, PCNI…FNDV, and HDGV…IPQC. The N-linked (GlcNAc...) asparagine glycan is linked to Asn-584.

It belongs to the peptidase M10A family. The cofactor is Zn(2+).

The enzyme catalyses Hydrolysis of proteins of the fertilization envelope and dimethylcasein.. Its function is as follows. Allows the sea urchin to digest the protective envelope derived from the egg extracellular matrix; thus allowing the sea urchin to swim freely. The sequence is that of Hatching enzyme from Paracentrotus lividus (Common sea urchin).